The following is a 559-amino-acid chain: MANAPVLLLKEGTQRSSGRDALKNNILAAVTLAEMLKSSLGPRGLDKMLIDSFGDVTITNDGATIVKEMEIQHPAAKLLVEAAKAQDAEVGDGTTSAVVLAGLLLDKADDLLDQNIHPTIIIEGYKKALNKSLEIIDQLATKIDVSNLNSLATRDQLKKIVYTTMSSKFIAGGEEMDKIMNMVIDAVSIVAEPLPEGGYNVPLDLIKIDKKKGGSIEDSMLVHGLVLDKEVVHPGMPRRVEKAKIAVLDAALEVEKPEISAKISITSPEQIKAFLDEEAKYLKDMVDKLASIGANVVICQKGIDDVAQHFLAKKGILAVRRVKRSDIEKLEKALGARIISSIKDATPEDLGYAELVEERRVGNDKMVFIEGAKNPKAVNILLRGSNDMALDEAERSINDALHSLRNVLMKPMIVAGGGAVETELALRLREYARSVGGKEQLAIEKFAEALEEIPMILAETAGMEPIQTLMDLRAKHAKGLINAGVDVMNGKIADDMLALNVLEPVRVKAQVLKSAVEAATAILKIDDLIAAAPLKSGEKKGEKKEGGEEEKSSTPSSLE.

The span at 536-552 shows a compositional bias: basic and acidic residues; the sequence is SGEKKGEKKEGGEEEKS. The segment at 536–559 is disordered; the sequence is SGEKKGEKKEGGEEEKSSTPSSLE.

It belongs to the TCP-1 chaperonin family. As to quaternary structure, forms a Heterooligomeric complex of two stacked nine-membered rings; one of alpha and the other of beta subunits.

Functionally, molecular chaperone; binds unfolded polypeptides in vitro, and has a weak ATPase activity. The sequence is that of Thermosome subunit alpha (thsA) from Sulfurisphaera tokodaii (strain DSM 16993 / JCM 10545 / NBRC 100140 / 7) (Sulfolobus tokodaii).